Consider the following 494-residue polypeptide: Alpha-amylase-related protein (494 aa).

A signal peptide spans Met-1–Ala-20. Residue Gln-21 is modified to Pyrrolidone carboxylic acid. Residues Cys-48 and Cys-104 are joined by a disulfide bond. Positions 118, 169, and 178 each coordinate Ca(2+). Cys-157 and Cys-171 are disulfide-bonded. Chloride is bound at residue Arg-206. Asp-208 (nucleophile) is an active-site residue. His-212 contributes to the Ca(2+) binding site. Glu-245 (proton donor) is an active-site residue. 2 residues coordinate chloride: Asn-308 and Arg-343. Cystine bridges form between Cys-376-Cys-382, Cys-418-Cys-441, and Cys-448-Cys-460.

It belongs to the glycosyl hydrolase 13 family. In terms of assembly, monomer. It depends on Ca(2+) as a cofactor. The cofactor is chloride.

It localises to the secreted. It catalyses the reaction Endohydrolysis of (1-&gt;4)-alpha-D-glucosidic linkages in polysaccharides containing three or more (1-&gt;4)-alpha-linked D-glucose units.. The chain is Alpha-amylase-related protein (Amyrel) from Drosophila punjabiensis (Fruit fly).